Reading from the N-terminus, the 400-residue chain is Endoglucanase 5A (400 aa).

A signal peptide spans 1 to 26; it reads MKKITTIFVVLLMTVALFSIGNTTAA. Substrate-binding positions include His61, 65 to 66, Tyr92, and His127; that span reads WY. Catalysis depends on Glu165, which acts as the Proton donor. Residue Tyr228 participates in substrate binding. Glu254 acts as the Nucleophile in catalysis. Substrate contacts are provided by residues 260–261, Trp288, and 293–295; these read AT and KDE. The segment at 328 to 363 is disordered; it reads ESASIPPSDPTPPSDPGEPDPTPPSDPGEYPAWDPN. Residues 334 to 353 show a composition bias toward pro residues; it reads PSDPTPPSDPGEPDPTPPSD. The Chitin-binding type-3 domain maps to 357–396; that stretch reads YPAWDPNQIYTNEIVYHNGQLWQAKWWTQNQEPGDPYGPW.

It belongs to the glycosyl hydrolase 5 (cellulase A) family. In terms of assembly, monomer.

Its subcellular location is the secreted. It carries out the reaction Endohydrolysis of (1-&gt;4)-beta-D-glucosidic linkages in cellulose, lichenin and cereal beta-D-glucans.. This is Endoglucanase 5A (cel5A) from Salipaludibacillus agaradhaerens (Bacillus agaradhaerens).